A 142-amino-acid polypeptide reads, in one-letter code: Alpha-lactalbumin (142 aa).

The signal sequence occupies residues Met1–Ala19. One can recognise a C-type lysozyme domain in the interval Glu20–Leu142. 4 disulfides stabilise this stretch: Cys25/Cys139, Cys47/Cys130, Cys80/Cys96, and Cys92/Cys110. N-linked (GlcNAc...) asparagine glycosylation is found at Asn64 and Asn93. Residues Lys98, Asp101, Asp103, Asp106, and Asp107 each coordinate Ca(2+).

It belongs to the glycosyl hydrolase 22 family. In terms of assembly, lactose synthase (LS) is a heterodimer of a catalytic component, beta1,4-galactosyltransferase (beta4Gal-T1) and a regulatory component, alpha-lactalbumin (LA). Mammary gland specific. Secreted in milk.

The protein localises to the secreted. Functionally, regulatory subunit of lactose synthase, changes the substrate specificity of galactosyltransferase in the mammary gland making glucose a good acceptor substrate for this enzyme. This enables LS to synthesize lactose, the major carbohydrate component of milk. In other tissues, galactosyltransferase transfers galactose onto the N-acetylglucosamine of the oligosaccharide chains in glycoproteins. The chain is Alpha-lactalbumin (LALBA) from Bos mutus grunniens (Wild yak).